The following is a 182-amino-acid chain: Prorelaxin (182 aa).

The signal sequence occupies residues 1–25 (MRRLFLSHVLGAWLLLSQLPRELSG). Q26 is modified (pyrrolidone carboxylic acid). Disulfide bonds link C35-C169, C47-C182, and C168-C173. Residues 54-156 (KTVLRLEEPG…LKNLGLDKHS (103 aa)) constitute a propeptide, connecting peptide. Residues 161-162 (MI) constitute a propeptide that is removed on maturation. Q163 is modified (pyrrolidone carboxylic acid).

Belongs to the insulin family. Heterodimer of a B chain and an A chain linked by two disulfide bonds.

The protein localises to the secreted. Its function is as follows. Relaxin is an ovarian hormone that acts with estrogen to produce dilatation of the birth canal in many mammals. The sequence is that of Prorelaxin (RLN) from Equus caballus (Horse).